A 161-amino-acid chain; its full sequence is Protein ZMO0507 (161 aa).

The protein belongs to the free Met sulfoxide reductase family.

This is Protein ZMO0507 from Zymomonas mobilis subsp. mobilis (strain ATCC 31821 / ZM4 / CP4).